The sequence spans 417 residues: Serine hydroxymethyltransferase 3 (417 aa).

Residues leucine 121 and 125-127 (GHL) contribute to the (6S)-5,6,7,8-tetrahydrofolate site. Lysine 230 is modified (N6-(pyridoxal phosphate)lysine). Residue 355–357 (SPF) participates in (6S)-5,6,7,8-tetrahydrofolate binding.

Belongs to the SHMT family. As to quaternary structure, homodimer. Pyridoxal 5'-phosphate is required as a cofactor.

The protein resides in the cytoplasm. The enzyme catalyses (6R)-5,10-methylene-5,6,7,8-tetrahydrofolate + glycine + H2O = (6S)-5,6,7,8-tetrahydrofolate + L-serine. It functions in the pathway one-carbon metabolism; tetrahydrofolate interconversion. The protein operates within amino-acid biosynthesis; glycine biosynthesis; glycine from L-serine: step 1/1. Catalyzes the reversible interconversion of serine and glycine with tetrahydrofolate (THF) serving as the one-carbon carrier. This reaction serves as the major source of one-carbon groups required for the biosynthesis of purines, thymidylate, methionine, and other important biomolecules. Also exhibits THF-independent aldolase activity toward beta-hydroxyamino acids, producing glycine and aldehydes, via a retro-aldol mechanism. The sequence is that of Serine hydroxymethyltransferase 3 from Pseudomonas fluorescens (strain Pf0-1).